The following is a 319-amino-acid chain: Malate dehydrogenase (319 aa).

NAD(+)-binding positions include 10-15 and D34; that span reads GSGNIG. Positions 83 and 89 each coordinate substrate. NAD(+)-binding positions include N96 and 119–121; that span reads ITN. The substrate site is built by N121 and R152. H176 acts as the Proton acceptor in catalysis.

It belongs to the LDH/MDH superfamily. MDH type 3 family.

The catalysed reaction is (S)-malate + NAD(+) = oxaloacetate + NADH + H(+). Catalyzes the reversible oxidation of malate to oxaloacetate. This is Malate dehydrogenase from Paramagnetospirillum magneticum (strain ATCC 700264 / AMB-1) (Magnetospirillum magneticum).